Reading from the N-terminus, the 61-residue chain is Sec-independent protein translocase protein TatA (61 aa).

A helical transmembrane segment spans residues 1 to 21; that stretch reads MFGIGMPEMLIILVIILIIFG.

The protein belongs to the TatA/E family. The Tat system comprises two distinct complexes: a TatABC complex, containing multiple copies of TatA, TatB and TatC subunits, and a separate TatA complex, containing only TatA subunits. Substrates initially bind to the TatABC complex, which probably triggers association of the separate TatA complex to form the active translocon.

The protein resides in the cell inner membrane. Functionally, part of the twin-arginine translocation (Tat) system that transports large folded proteins containing a characteristic twin-arginine motif in their signal peptide across membranes. TatA could form the protein-conducting channel of the Tat system. This is Sec-independent protein translocase protein TatA from Syntrophus aciditrophicus (strain SB).